A 632-amino-acid chain; its full sequence is MSIDCLYRRSSLFDTSFVPLHSSIPATSKMSASNSDVNAPISPVVDEGKSELVSPTLERLVAPFNCSPSSTPLQDVAGVGSKMSDTLWMGDLEPWMDATFIQQLWASLNEPVNVKVMRSKASSSETLISYCFVQFSSSAAAERALMKYNNTMIPGAHCTFKLNWATGGGIQHNNFVSRDPEFSIFVGDLLPTTEDSDLFMTFRSIYPSCTSAKIIVDPVTGLSRKYGFVRFSSEKEQQHALMHMQGYLCQGRPLRISVASPKSRASIAADSALGIVPTSTSNRQPNQDLCSMDPLNTTVFVGGLASNLSEKDLQVCFQPFGRILNIKIPFGKGCGFVQYSEKSAAEKAINTMQGALVGTSHIRLAWGHNTLPVSALSQSQSQVSDEGFDRTLSANQIFGMNQSVIGANSGSSNSSGSSLKSAPVSPRTAAAQSLLPNSVVSSINGMNSVNFSTISPPPLSRSASISPTLSGSGSGLTPLSSHFPSAATGLVGGQVYPQSSVLQSSKINGSAKVQPSVKLPEWLQPFSGNNHNSFATQDLLTRVSSLKLVDDEQPASLNGSAFQARASRPWNLGRERQSSLIDLRHELEQNENGLEKSGFGLNLRGRLPPRSYSTFNCTGQYLQPSLRLSRDS.

Residues serine 42 and serine 54 each carry the phosphoserine; by MAPK sty1 modification. A phosphoserine mark is found at serine 67 and serine 69. 2 consecutive RRM domains span residues 85–167 (DTLW…WATG) and 182–261 (FSIF…VASP). At serine 291 the chain carries Phosphoserine; by MAPK sty1. An RRM 3 domain is found at 297–369 (TTVFVGGLAS…SHIRLAWGHN (73 aa)). Serine 455 is subject to Phosphoserine; by MAPK sty1. Residues 456–476 (PPPLSRSASISPTLSGSGSGL) are disordered. Low complexity predominate over residues 466–476 (SPTLSGSGSGL).

Interacts with cip1 and cip2.

It localises to the cytoplasm. In terms of biological role, regulates global gene expression after oxidative stress. Interacts and stabilizes atf1 and pcr1 mRNAs after oxidative stress, thus controlling their turnover. The chain is RNA-binding post-transcriptional regulator csx1 (csx1) from Schizosaccharomyces pombe (strain 972 / ATCC 24843) (Fission yeast).